The following is a 397-amino-acid chain: Elongation factor Tu (397 aa).

Residues 10-207 (KPHCNIGTIG…EVDKYIPQPE (198 aa)) enclose the tr-type G domain. Residues 19–26 (GHVDHGKT) are G1. 19-26 (GHVDHGKT) contributes to the GTP binding site. A Mg(2+)-binding site is contributed by Thr-26. The G2 stretch occupies residues 61 to 65 (GITIS). The tract at residues 82 to 85 (DCPG) is G3. GTP contacts are provided by residues 82 to 86 (DCPGH) and 137 to 140 (NKCD). The G4 stretch occupies residues 137-140 (NKCD). The G5 stretch occupies residues 175–177 (SAL).

This sequence belongs to the TRAFAC class translation factor GTPase superfamily. Classic translation factor GTPase family. EF-Tu/EF-1A subfamily. Monomer.

It is found in the cytoplasm. It carries out the reaction GTP + H2O = GDP + phosphate + H(+). Its function is as follows. GTP hydrolase that promotes the GTP-dependent binding of aminoacyl-tRNA to the A-site of ribosomes during protein biosynthesis. The protein is Elongation factor Tu of Azorhizobium caulinodans (strain ATCC 43989 / DSM 5975 / JCM 20966 / LMG 6465 / NBRC 14845 / NCIMB 13405 / ORS 571).